The sequence spans 238 residues: Ribonuclease PH (238 aa).

Phosphate contacts are provided by residues Arg-86 and 124–126; that span reads GTR.

This sequence belongs to the RNase PH family. Homohexameric ring arranged as a trimer of dimers.

It carries out the reaction tRNA(n+1) + phosphate = tRNA(n) + a ribonucleoside 5'-diphosphate. In terms of biological role, phosphorolytic 3'-5' exoribonuclease that plays an important role in tRNA 3'-end maturation. Removes nucleotide residues following the 3'-CCA terminus of tRNAs; can also add nucleotides to the ends of RNA molecules by using nucleoside diphosphates as substrates, but this may not be physiologically important. Probably plays a role in initiation of 16S rRNA degradation (leading to ribosome degradation) during starvation. This chain is Ribonuclease PH, found in Actinobacillus succinogenes (strain ATCC 55618 / DSM 22257 / CCUG 43843 / 130Z).